We begin with the raw amino-acid sequence, 151 residues long: Transcriptional regulator MraZ (151 aa).

2 SpoVT-AbrB domains span residues 5–52 (IHQV…PLSE) and 81–124 (ATDL…SQEE).

This sequence belongs to the MraZ family. Forms oligomers.

Its subcellular location is the cytoplasm. It localises to the nucleoid. In Marinomonas sp. (strain MWYL1), this protein is Transcriptional regulator MraZ.